Consider the following 187-residue polypeptide: UPF0200 protein APE_1753.1 (187 aa).

Residue Gly13–Ser20 coordinates ATP.

The protein belongs to the UPF0200 family.

This Aeropyrum pernix (strain ATCC 700893 / DSM 11879 / JCM 9820 / NBRC 100138 / K1) protein is UPF0200 protein APE_1753.1.